The following is a 288-amino-acid chain: Bifunctional protein FolD (288 aa).

NADP(+)-binding positions include 163–165 (GRS), serine 188, and isoleucine 229.

The protein belongs to the tetrahydrofolate dehydrogenase/cyclohydrolase family. Homodimer.

The catalysed reaction is (6R)-5,10-methylene-5,6,7,8-tetrahydrofolate + NADP(+) = (6R)-5,10-methenyltetrahydrofolate + NADPH. It catalyses the reaction (6R)-5,10-methenyltetrahydrofolate + H2O = (6R)-10-formyltetrahydrofolate + H(+). The protein operates within one-carbon metabolism; tetrahydrofolate interconversion. Its function is as follows. Catalyzes the oxidation of 5,10-methylenetetrahydrofolate to 5,10-methenyltetrahydrofolate and then the hydrolysis of 5,10-methenyltetrahydrofolate to 10-formyltetrahydrofolate. The chain is Bifunctional protein FolD from Campylobacter curvus (strain 525.92).